The chain runs to 224 residues: 7-cyano-7-deazaguanine synthase (224 aa).

Residue 12–22 (LSGGLDSSTVT) coordinates ATP. Positions 193, 201, 204, and 207 each coordinate Zn(2+).

This sequence belongs to the QueC family. Requires Zn(2+) as cofactor.

It catalyses the reaction 7-carboxy-7-deazaguanine + NH4(+) + ATP = 7-cyano-7-deazaguanine + ADP + phosphate + H2O + H(+). The protein operates within purine metabolism; 7-cyano-7-deazaguanine biosynthesis. Its function is as follows. Catalyzes the ATP-dependent conversion of 7-carboxy-7-deazaguanine (CDG) to 7-cyano-7-deazaguanine (preQ(0)). This chain is 7-cyano-7-deazaguanine synthase, found in Prochlorococcus marinus (strain MIT 9215).